A 137-amino-acid chain; its full sequence is Large ribosomal subunit protein bL17 (137 aa).

The protein belongs to the bacterial ribosomal protein bL17 family. As to quaternary structure, part of the 50S ribosomal subunit. Contacts protein L32.

The polypeptide is Large ribosomal subunit protein bL17 (Rickettsia typhi (strain ATCC VR-144 / Wilmington)).